A 176-amino-acid chain; its full sequence is Retinol-binding protein 4-A (176 aa).

Serine 1 carries the post-translational modification N-acetylserine. 3 disulfide bridges follow: cysteine 3–cysteine 159, cysteine 69–cysteine 173, and cysteine 119–cysteine 128. Residue glutamine 97 coordinates substrate.

The protein belongs to the calycin superfamily. Lipocalin family.

It localises to the secreted. Functionally, RBP delivers retinol from the liver stores to the peripheral tissues. In plasma, the RBP-retinol complex interacts with transthyretin, this prevents its loss by filtration through the kidney glomeruli. This chain is Retinol-binding protein 4-A (rbp4a), found in Oncorhynchus mykiss (Rainbow trout).